We begin with the raw amino-acid sequence, 229 residues long: Ribonuclease 3 (229 aa).

The 123-residue stretch at 5–127 folds into the RNase III domain; sequence LSRLERQLGY…LIGAIYLDAG (123 aa). Glu-40 provides a ligand contact to Mg(2+). Asp-44 is an active-site residue. Mg(2+)-binding residues include Asp-113 and Glu-116. Residue Glu-116 is part of the active site. A DRBM domain is found at 154 to 224; the sequence is DPKTRLQEFL…AAAALIALGV (71 aa).

It belongs to the ribonuclease III family. In terms of assembly, homodimer. Mg(2+) serves as cofactor.

It is found in the cytoplasm. It catalyses the reaction Endonucleolytic cleavage to 5'-phosphomonoester.. In terms of biological role, digests double-stranded RNA. Involved in the processing of primary rRNA transcript to yield the immediate precursors to the large and small rRNAs (23S and 16S). Processes some mRNAs, and tRNAs when they are encoded in the rRNA operon. Processes pre-crRNA and tracrRNA of type II CRISPR loci if present in the organism. This Pseudomonas syringae pv. tomato (strain ATCC BAA-871 / DC3000) protein is Ribonuclease 3.